Here is a 105-residue protein sequence, read N- to C-terminus: uncharacterized protein (105 aa).

Low complexity predominate over residues 31–47 (SVNLPSPSVKPSVTPSV). The segment at 31 to 80 (SVNLPSPSVKPSVTPSVKKPPHVIRSDYSKPREKPAKVAKKPTVKNDKKP) is disordered. Basic and acidic residues predominate over residues 54-66 (IRSDYSKPREKPA).

This is an uncharacterized protein from Caenorhabditis elegans.